Reading from the N-terminus, the 216-residue chain is Probable GTP-binding protein EngB (216 aa).

The region spanning 43-216 is the EngB-type G domain; it reads DRIEVCFAGR…TLRSIIAHLD (174 aa). Residues 51–58, 78–82, 96–99, 163–166, and 197–199 each bind GTP; these read GRSNVGKS, GRTQE, DLPG, TKAD, and TSS. Positions 58 and 80 each coordinate Mg(2+).

Belongs to the TRAFAC class TrmE-Era-EngA-EngB-Septin-like GTPase superfamily. EngB GTPase family. It depends on Mg(2+) as a cofactor.

Its function is as follows. Necessary for normal cell division and for the maintenance of normal septation. The sequence is that of Probable GTP-binding protein EngB from Ruegeria sp. (strain TM1040) (Silicibacter sp.).